The primary structure comprises 145 residues: D-aminoacyl-tRNA deacylase (145 aa).

Positions 137 to 138 (GP) match the Gly-cisPro motif, important for rejection of L-amino acids motif.

Belongs to the DTD family. In terms of assembly, homodimer.

The protein localises to the cytoplasm. The enzyme catalyses glycyl-tRNA(Ala) + H2O = tRNA(Ala) + glycine + H(+). It carries out the reaction a D-aminoacyl-tRNA + H2O = a tRNA + a D-alpha-amino acid + H(+). Its function is as follows. An aminoacyl-tRNA editing enzyme that deacylates mischarged D-aminoacyl-tRNAs. Also deacylates mischarged glycyl-tRNA(Ala), protecting cells against glycine mischarging by AlaRS. Acts via tRNA-based rather than protein-based catalysis; rejects L-amino acids rather than detecting D-amino acids in the active site. By recycling D-aminoacyl-tRNA to D-amino acids and free tRNA molecules, this enzyme counteracts the toxicity associated with the formation of D-aminoacyl-tRNA entities in vivo and helps enforce protein L-homochirality. The chain is D-aminoacyl-tRNA deacylase from Pseudoalteromonas translucida (strain TAC 125).